The chain runs to 210 residues: Thymidylate kinase (210 aa).

Residue 10 to 17 participates in ATP binding; sequence GLEGAGKT.

Belongs to the thymidylate kinase family.

It catalyses the reaction dTMP + ATP = dTDP + ADP. Its function is as follows. Phosphorylation of dTMP to form dTDP in both de novo and salvage pathways of dTTP synthesis. This chain is Thymidylate kinase, found in Erwinia tasmaniensis (strain DSM 17950 / CFBP 7177 / CIP 109463 / NCPPB 4357 / Et1/99).